Reading from the N-terminus, the 240-residue chain is MLRYLFRRLVKALMWFMVGSVLLVLLLRFVPPPGTALMVERKIESWVDNDPIDLQRTWKPWDEISDNLKVAVIAGEDQKFPEHWGFDIDAIQAALIHNERGGSIRGASTLSQQVSKNLFLWSGRSYLRKGLEAWFTALIEVFWPKQRILEVYLNSVEWDEGVFGAEAAARHHFGVSAANLSRQQASLLAAVLPNPRVWSAARPSTYVMQRAGWVRRQMSQLGGADYLNRLNESRRAPWAE.

The helical transmembrane segment at 12-31 (ALMWFMVGSVLLVLLLRFVP) threads the bilayer.

It belongs to the glycosyltransferase 51 family.

The protein localises to the cell inner membrane. It catalyses the reaction [GlcNAc-(1-&gt;4)-Mur2Ac(oyl-L-Ala-gamma-D-Glu-L-Lys-D-Ala-D-Ala)](n)-di-trans,octa-cis-undecaprenyl diphosphate + beta-D-GlcNAc-(1-&gt;4)-Mur2Ac(oyl-L-Ala-gamma-D-Glu-L-Lys-D-Ala-D-Ala)-di-trans,octa-cis-undecaprenyl diphosphate = [GlcNAc-(1-&gt;4)-Mur2Ac(oyl-L-Ala-gamma-D-Glu-L-Lys-D-Ala-D-Ala)](n+1)-di-trans,octa-cis-undecaprenyl diphosphate + di-trans,octa-cis-undecaprenyl diphosphate + H(+). Its pathway is cell wall biogenesis; peptidoglycan biosynthesis. In terms of biological role, peptidoglycan polymerase that catalyzes glycan chain elongation from lipid-linked precursors. This is Biosynthetic peptidoglycan transglycosylase from Pseudomonas fluorescens (strain ATCC BAA-477 / NRRL B-23932 / Pf-5).